A 151-amino-acid chain; its full sequence is Cysteine proteinase inhibitor 10 (151 aa).

A signal peptide spans 1 to 22; sequence MATSPMLFLVSLLLVLVAAATG. The 70-residue stretch at 40 to 109 folds into the Cystatin domain; it reads GGRTEIRDVG…GVAYYLKVAA (70 aa). Residues 96-100 carry the Secondary area of contact motif; that stretch reads QVVSG.

It belongs to the cystatin family. Phytocystatin subfamily.

Its subcellular location is the secreted. Specific inhibitor of cysteine proteinases. Probably involved in the regulation of endogenous processes and in defense against pests and pathogens. In Oryza sativa subsp. indica (Rice), this protein is Cysteine proteinase inhibitor 10.